The sequence spans 316 residues: Pantothenate kinase (316 aa).

95–102 (GSVAVGKS) is an ATP binding site.

This sequence belongs to the prokaryotic pantothenate kinase family.

It is found in the cytoplasm. The catalysed reaction is (R)-pantothenate + ATP = (R)-4'-phosphopantothenate + ADP + H(+). It participates in cofactor biosynthesis; coenzyme A biosynthesis; CoA from (R)-pantothenate: step 1/5. The chain is Pantothenate kinase from Shewanella loihica (strain ATCC BAA-1088 / PV-4).